Consider the following 131-residue polypeptide: Small ribosomal subunit protein uS8 (131 aa).

The protein belongs to the universal ribosomal protein uS8 family. As to quaternary structure, part of the 30S ribosomal subunit. Contacts proteins S5 and S12.

Functionally, one of the primary rRNA binding proteins, it binds directly to 16S rRNA central domain where it helps coordinate assembly of the platform of the 30S subunit. This chain is Small ribosomal subunit protein uS8, found in Bordetella petrii (strain ATCC BAA-461 / DSM 12804 / CCUG 43448).